The primary structure comprises 296 residues: MAGLSLQHPWAFAFGLLGNLISFTTYLAPIPTFYRIYKSKSTEGFQSVPYVVALFSAMLWIFYALIKSNEALLITINAAGCVIETIYIVMYLAYAPKKAKVFTTKILLLLNVGVFGVILLLTLLLSHGEQRVVSLGWVCVAFSVSVFVAPLSIIKRVIQSRSVEYMPFSLSLTLTLSAVVWFLYGLLIKDKYVALPNILGFTFGVVQMGLYVFYMNATPVAGEGKEGKGKLAAAEELPVVVNVGKLAAATPDRSTGAVHVHPVPRSCAAEAAAAEPEVLVDIPPPPPPRAVEVAAV.

Over 1-9 (MAGLSLQHP) the chain is Extracellular. Residues 10 to 30 (WAFAFGLLGNLISFTTYLAPI) traverse the membrane as a helical segment. The region spanning 13 to 98 (AFGLLGNLIS…VMYLAYAPKK (86 aa)) is the MtN3/slv 1 domain. Over 31-45 (PTFYRIYKSKSTEGF) the chain is Cytoplasmic. Residues 46 to 66 (QSVPYVVALFSAMLWIFYALI) traverse the membrane as a helical segment. Residues 67-71 (KSNEA) are Extracellular-facing. The chain crosses the membrane as a helical span at residues 72–92 (LLITINAAGCVIETIYIVMYL). At 93 to 105 (AYAPKKAKVFTTK) the chain is on the cytoplasmic side. Residues 106–126 (ILLLLNVGVFGVILLLTLLLS) traverse the membrane as a helical segment. Residues 127–133 (HGEQRVV) lie on the Extracellular side of the membrane. Residues 134 to 154 (SLGWVCVAFSVSVFVAPLSII) form a helical membrane-spanning segment. In terms of domain architecture, MtN3/slv 2 spans 134–217 (SLGWVCVAFS…MGLYVFYMNA (84 aa)). Over 155–167 (KRVIQSRSVEYMP) the chain is Cytoplasmic. The chain crosses the membrane as a helical span at residues 168-188 (FSLSLTLTLSAVVWFLYGLLI). Over 189 to 192 (KDKY) the chain is Extracellular. A helical transmembrane segment spans residues 193-213 (VALPNILGFTFGVVQMGLYVF). Topologically, residues 214-296 (YMNATPVAGE…PPRAVEVAAV (83 aa)) are cytoplasmic.

Belongs to the SWEET sugar transporter family. In terms of assembly, forms homooligomers and/or heterooligomers.

Its subcellular location is the cell membrane. Its function is as follows. Mediates both low-affinity uptake and efflux of sugar across the plasma membrane. Functionally, confers blight susceptibility. Confers TAL effector-mediated susceptibility to Xanthomonas oryzae pv. oryzae. The chain is Bidirectional sugar transporter SWEET13 (SWEET13) from Oryza sativa subsp. japonica (Rice).